Here is a 190-residue protein sequence, read N- to C-terminus: Xanthine phosphoribosyltransferase (190 aa).

2 residues coordinate xanthine: leucine 20 and asparagine 27. 128–132 (ANGKA) lines the 5-phospho-alpha-D-ribose 1-diphosphate pocket. Xanthine is bound at residue lysine 156.

Belongs to the purine/pyrimidine phosphoribosyltransferase family. Xpt subfamily. In terms of assembly, homodimer.

The protein resides in the cytoplasm. The catalysed reaction is XMP + diphosphate = xanthine + 5-phospho-alpha-D-ribose 1-diphosphate. It functions in the pathway purine metabolism; XMP biosynthesis via salvage pathway; XMP from xanthine: step 1/1. Its function is as follows. Converts the preformed base xanthine, a product of nucleic acid breakdown, to xanthosine 5'-monophosphate (XMP), so it can be reused for RNA or DNA synthesis. The sequence is that of Xanthine phosphoribosyltransferase from Stutzerimonas stutzeri (strain A1501) (Pseudomonas stutzeri).